The sequence spans 444 residues: Probable glycine dehydrogenase (decarboxylating) subunit 1 (444 aa).

The protein belongs to the GcvP family. N-terminal subunit subfamily. The glycine cleavage system is composed of four proteins: P, T, L and H. In this organism, the P 'protein' is a heterodimer of two subunits.

It catalyses the reaction N(6)-[(R)-lipoyl]-L-lysyl-[glycine-cleavage complex H protein] + glycine + H(+) = N(6)-[(R)-S(8)-aminomethyldihydrolipoyl]-L-lysyl-[glycine-cleavage complex H protein] + CO2. Its function is as follows. The glycine cleavage system catalyzes the degradation of glycine. The P protein binds the alpha-amino group of glycine through its pyridoxal phosphate cofactor; CO(2) is released and the remaining methylamine moiety is then transferred to the lipoamide cofactor of the H protein. The polypeptide is Probable glycine dehydrogenase (decarboxylating) subunit 1 (Chlorobium phaeobacteroides (strain DSM 266 / SMG 266 / 2430)).